The following is a 414-amino-acid chain: Serine/threonine-protein kinase 32B (414 aa).

Residues 23 to 283 (FQILRAIGKG…LHDIQSVPYL (261 aa)) form the Protein kinase domain. ATP is bound by residues 29–37 (IGKGSFGKV) and lysine 52. The active-site Proton acceptor is the aspartate 146. The segment at 374–396 (QGQGSQLLDTDSRGGGQAQSKLQ) is disordered.

Belongs to the protein kinase superfamily. Ser/Thr protein kinase family. Mg(2+) serves as cofactor.

The catalysed reaction is L-seryl-[protein] + ATP = O-phospho-L-seryl-[protein] + ADP + H(+). It catalyses the reaction L-threonyl-[protein] + ATP = O-phospho-L-threonyl-[protein] + ADP + H(+). This chain is Serine/threonine-protein kinase 32B, found in Homo sapiens (Human).